Reading from the N-terminus, the 148-residue chain is Endothelial differentiation-related factor 1 (148 aa).

A2 bears the N-acetylalanine mark. The residue at position 4 (S4) is a Phosphoserine. At K25 the chain carries N6-methyllysine. The segment covering 33–42 has biased composition (basic and acidic residues); it reads RRGEDVETSK. The tract at residues 33-66 is disordered; the sequence is RRGEDVETSKKWAAGQNKQHSITKNTAKLDRETE. Residues 37–113 are interaction with NR5A2, PPARG and NR1H3; the sequence is DVETSKKWAA…QVIADYESGR (77 aa). A compositionally biased stretch (polar residues) spans 48–58; the sequence is QNKQHSITKNT. The interaction with TBP and NR5A1 stretch occupies residues 69–108; sequence HHDRVTLEVGKVIQQGRQSKGLTQKDLATKINEKPQVIAD. The IQ motif motif lies at 81 to 88; sequence IQQGRQSK. One can recognise an HTH cro/C1-type domain in the interval 81 to 135; the sequence is IQQGRQSKGLTQKDLATKINEKPQVIADYESGRAIPNNQVLGKIERAIGLKLRGK. The segment at residues 92–111 is a DNA-binding region (H-T-H motif); sequence QKDLATKINEKPQVIADYES.

In terms of assembly, interacts with TBP and the transcription factor IID (TFIID) complex, NR5A2, NR1H3 and PPARG. Interaction with TBP is regulated by phosphorylation. Binds NR5A1, ATF1, FOS and JUN via their conserved basic region. Binding to calmodulin is regulated by calcium and phosphorylation of the IQ motif. Phosphorylated (by PKA and PKC). Expressed in brain, liver, lung, kidney and heart (at protein level). Ubiquitously expressed. More abundant in heart, pancreas, liver, intestine and adipose tissues.

The protein localises to the cytoplasm. It localises to the nucleus. Transcriptional coactivator stimulating NR5A1 and ligand-dependent NR1H3/LXRA and PPARG transcriptional activities. Enhances the DNA-binding activity of ATF1, ATF2, CREB1 and NR5A1. Regulates nitric oxid synthase activity probably by sequestering calmodulin in the cytoplasm. May function in endothelial cells differentiation, hormone-induced cardiomyocytes hypertrophy and lipid metabolism. This is Endothelial differentiation-related factor 1 (EDF1) from Homo sapiens (Human).